Reading from the N-terminus, the 411-residue chain is Diels-Alderase ffsF (411 aa).

The first 17 residues, 1–17, serve as a signal peptide directing secretion; sequence MTQIKLLLLSLAITAQS.

This sequence belongs to the Diels-Alderase family.

It functions in the pathway mycotoxin biosynthesis. In terms of biological role, diels-Alderase; part of the gene cluster that mediates the biosynthesis of the cytotoxic leucine-containing cytochalasans, including aspochalasin C, aspochalasin E, TMC-169, flavichalasine F, aspergillin PZ, aspochalasin M and flavichalasine G. The first step in the pathway is catalyzed by the hybrid PKS-NRPS ffsA that utilizes 8 units of malonyl-CoA to iteratively assemble the octaketide chain before addition of L-leucine by the C-terminal NRPS modules. Because ffsA lacks a designated enoylreductase (ER) domain, the required activity is provided the enoyl reductase fssC. The methyltransferase (MT) domain of ffsA catalyzes the alpha-methylation at C10 and C14 using S-adenosyl-L-methionine as the methyl-donating cosubstrate. Reduction by the hydrolyase ffsE, followed by dehydration and intra-molecular Diels-Alder cyclization by the Diels-Alderase ffsF then yield the required isoindolone-fused macrocycle. A number of oxidative steps catalyzed by the tailoring cytochrome P450 monooxygenase ffsD, the FAD-linked oxidoreductase ffsJ and the short-chain dehydrogenase/reductase ffsI, are further required to afford the final products. This is Diels-Alderase ffsF from Aspergillus flavipes.